A 562-amino-acid polypeptide reads, in one-letter code: mRNA cleavage and polyadenylation factor CLP1 (562 aa).

Positions 1–27 are disordered; that stretch reads MSLPGLELSQQPIEARRAPPQPTQISL. Residues E32, K71, and 154-159 each bind ATP; that span reads DAGKTS. Positions 415–483 are disordered; that stretch reads EDEYDPSKFD…STTPFTNLPS (69 aa). Residues 445 to 479 are compositionally biased toward low complexity; the sequence is SLQPPSGLLPGLRSELPSATTGFPSASTSSTTPFT.

Belongs to the Clp1 family. Clp1 subfamily. As to quaternary structure, component of a pre-mRNA cleavage factor complex. Interacts directly with PCF11.

The protein localises to the nucleus. In terms of biological role, required for endonucleolytic cleavage during polyadenylation-dependent pre-mRNA 3'-end formation. The protein is mRNA cleavage and polyadenylation factor CLP1 of Coccidioides immitis (strain RS) (Valley fever fungus).